A 621-amino-acid chain; its full sequence is Protein CASP (621 aa).

Residues 1–574 (MEIVSRAWES…ILATPKSRTV (574 aa)) lie on the Cytoplasmic side of the membrane. 2 coiled-coil regions span residues 101 to 445 (LLKG…VQDI) and 473 to 525 (ILTS…FLQS). Residues 575–595 (FFSYLLILHALIMLVLYKFAF) traverse the membrane as a helical; Anchor for type IV membrane protein segment. Topologically, residues 596 to 621 (DQSVVRDAETECEYKFHQHMLDNHKQ) are lumenal.

The protein belongs to the CASP family.

It is found in the golgi apparatus membrane. In terms of biological role, may be involved in intra-Golgi retrograde transport. The protein is Protein CASP (ceh-44) of Caenorhabditis elegans.